The primary structure comprises 809 residues: Leucine--tRNA ligase (809 aa).

The 'HIGH' region signature appears at proline 40–histidine 50. The 'KMSKS' region signature appears at lysine 579 to serine 583. ATP is bound at residue lysine 582.

It belongs to the class-I aminoacyl-tRNA synthetase family.

Its subcellular location is the cytoplasm. The catalysed reaction is tRNA(Leu) + L-leucine + ATP = L-leucyl-tRNA(Leu) + AMP + diphosphate. The polypeptide is Leucine--tRNA ligase (Campylobacter jejuni subsp. jejuni serotype O:23/36 (strain 81-176)).